The chain runs to 358 residues: L-tryptophan methyltransferase trpM (358 aa).

The protein belongs to the methyltransferase superfamily.

The catalysed reaction is L-tryptophan + S-adenosyl-L-methionine = N(alpha)-methyl-L-tryptophan + S-adenosyl-L-homocysteine + H(+). The enzyme catalyses N(alpha)-methyl-L-tryptophan + S-adenosyl-L-methionine = N(alpha),N(alpha)-dimethyl-L-tryptophan + S-adenosyl-L-homocysteine + H(+). It carries out the reaction N(alpha),N(alpha)-dimethyl-L-tryptophan + S-adenosyl-L-methionine = N(alpha),N(alpha),N(alpha)-trimethyl-L-tryptophan + S-adenosyl-L-homocysteine + H(+). Methyltransferase that catalyzes iterative L-tryptophan N-methylations to produce L-abrine (N-alpha-methyl-L-tryptophan) and N,N-alpha-dimethyl-L-tryptophan. Also catalyzes a third methylation to yield L-hypaphorine (N,N,N-alpha-trimethyl-L-tryptopan), an agonist of the phytohormone indole-3-acetic acid. Can also N-methylate the non-native amino acid substrate 4-hydroxytryptophan, but the ability to incorporate trpM into a functional psilocybin biosynthesis pathway is indeed thwarted by the inability of the L-tryptophan decarboxylase psiD to use N,N-dimethyl-4-hydroxytryptophan as substrate. The polypeptide is L-tryptophan methyltransferase trpM (Psilocybe serbica).